A 364-amino-acid polypeptide reads, in one-letter code: Metalloendoproteinase 1-MMP (364 aa).

Residues 1 to 28 form the signal peptide; the sequence is MSRNLIYRRNRALCFVLILFCFPYRFGA. Positions 29-149 are cleaved as a propeptide — activation peptide; sequence RNTPEAEQST…NNDFLHTTAH (121 aa). The N-linked (GlcNAc...) asparagine glycan is linked to asparagine 49. The Cysteine switch signature appears at 128–135; the sequence is PRCGVSDT. Residue cysteine 130 participates in Zn(2+) binding. Aspartate 211 contacts Ca(2+). Residues histidine 221 and aspartate 223 each contribute to the Zn(2+) site. Ca(2+)-binding residues include aspartate 228 and glycine 229. Histidine 236 is a Zn(2+) binding site. Glycine 243 contacts Ca(2+). Histidine 246 contacts Zn(2+). Aspartate 248 and glutamate 251 together coordinate Ca(2+). Histidine 275 contacts Zn(2+). Glutamate 276 is a catalytic residue. Residues histidine 279 and histidine 285 each contribute to the Zn(2+) site. Asparagine 338 carries an N-linked (GlcNAc...) asparagine glycan. Glycine 339 carries GPI-anchor amidated glycine lipidation. Residues 340 to 364 constitute a propeptide, removed in mature form; the sequence is TVSHRFLSGNFIGYVLLVVGLILFL.

This sequence belongs to the peptidase M10A family. Matrix metalloproteinases (MMPs) subfamily. The cofactor is Ca(2+). Zn(2+) serves as cofactor. In terms of tissue distribution, mostly expressed in flowers, roots and stems, and, to a lower extent, in leaves.

It localises to the cell membrane. Inhibited by human TIMP-1 and TIMP-2 and by the peptide hydroxamate inhibitor (BB-94). Repressed by acetohydroxamic acid (AHA). Functionally, matrix metalloproteinases (MMPs) or matrixins may play a role in the degradation and remodeling of the extracellular matrix (ECM) during development or in response to stresses. Can cleave myelin basic protein as well as fluorigenic peptide substrates, McaPLANvaDpaAR-NH(2) and McaPChaGNvaHADpa-NH(2) 4-fold more efficiently than McaPLGLDpaAR-NH(2) (QF24). Active on myelin basic protein (MBP) and, to some extent, on McaPLGLDpaAR-NH(2) (QF24) and beta-casein. This Arabidopsis thaliana (Mouse-ear cress) protein is Metalloendoproteinase 1-MMP.